A 359-amino-acid polypeptide reads, in one-letter code: tRNA-specific 2-thiouridylase MnmA (359 aa).

ATP contacts are provided by residues 11-18 (GISGGVDS) and isoleucine 37. The Nucleophile role is filled by cysteine 99. Cysteine 99 and cysteine 195 are disulfide-bonded. Glycine 123 lines the ATP pocket. Residues 145–147 (KDQ) are interaction with tRNA. Residue cysteine 195 is the Cysteine persulfide intermediate of the active site. The tract at residues 304–305 (RY) is interaction with tRNA.

It belongs to the MnmA/TRMU family.

It localises to the cytoplasm. It carries out the reaction S-sulfanyl-L-cysteinyl-[protein] + uridine(34) in tRNA + AH2 + ATP = 2-thiouridine(34) in tRNA + L-cysteinyl-[protein] + A + AMP + diphosphate + H(+). Functionally, catalyzes the 2-thiolation of uridine at the wobble position (U34) of tRNA, leading to the formation of s(2)U34. The chain is tRNA-specific 2-thiouridylase MnmA from Chlorobium phaeobacteroides (strain BS1).